The chain runs to 444 residues: ATP-dependent protease ATPase subunit HslU (444 aa).

ATP contacts are provided by residues Ile-20 and Gly-62–Glu-67. A disordered region spans residues Glu-130 to Gln-158. 3 residues coordinate ATP: Asp-257, Glu-322, and Arg-394.

It belongs to the ClpX chaperone family. HslU subfamily. As to quaternary structure, a double ring-shaped homohexamer of HslV is capped on each side by a ring-shaped HslU homohexamer. The assembly of the HslU/HslV complex is dependent on binding of ATP.

The protein localises to the cytoplasm. Its function is as follows. ATPase subunit of a proteasome-like degradation complex; this subunit has chaperone activity. The binding of ATP and its subsequent hydrolysis by HslU are essential for unfolding of protein substrates subsequently hydrolyzed by HslV. HslU recognizes the N-terminal part of its protein substrates and unfolds these before they are guided to HslV for hydrolysis. This is ATP-dependent protease ATPase subunit HslU from Bordetella parapertussis (strain 12822 / ATCC BAA-587 / NCTC 13253).